A 772-amino-acid chain; its full sequence is MEDILMPEGEKVSMENFALLRVLGKGAYGKVFLVRKVGGKDHNTIYAMKVLRKTRVLTKQKTLEHTMAERQVLERLRGTPFLVNLFYAFQTDTKLHIVMEYVRGGELFTHLCSRGHFDLEAARFVIAELVVAIDSLHQRKVIYRDLKLENILLDEEGHVKLTDFGLSKLFLPGELDRANSYCGTIEYMSPEVINRPEGGYSDVVDWWSLGVISFELLTGCSPFTVDGAQNSSKDIAKRIMTKKVPFPKTMDVDARDFIGQLLEKKLEKRLGYNGVDEIKNHKFMSSIDWDAAVKRTLKPVIVPRIGHDLDTQFFSAEFTSQPPLYSPAESPLNANTLFRGYSYVSPSVIFANDNVIGEELMAEDVNALLASSSFFAKYKLDKSDAGLLGKGAFSVVRRCERVVDGAQFAVKIVSQKFASQAQREARILEMVQGHPNIVQLHDVHSDPLHFYLVMEILTGNELLERIRKLERFTESEAADIMRQLVSAVKYLHDKRIVHRDLKPENILFESIDSSARLRLVDFGFARLLPNSMEQQLKSVQVLRKMTPCFTLQYAAPEVLDVGDSQPEYNEQCDLWSLGVVLFTMLSGQVPFHARSRQESATEIMQRICRAEFSFTGDAWTNVSADAKNLITGLLTVDPKKRLSMQELTAHMWLKSSASMDTPLQTPSILPSSADETFNETLRAFLHANRDGFHLLDVAAAPLMKRRGIKRQSGDKDASGNSKNSRVTQFECLPEEQEAEMTSSTSRPSNLGMMNYREPNSGTIRETRGSDSS.

One can recognise a Protein kinase 1 domain in the interval 17–284 (FALLRVLGKG…VDEIKNHKFM (268 aa)). ATP is bound by residues 23–31 (LGKGAYGKV) and lysine 49. The Proton acceptor role is filled by aspartate 145. A phosphoserine; by autocatalysis mark is found at serine 180, serine 342, and serine 347. Residues 285–353 (SSIDWDAAVK…VSPSVIFAND (69 aa)) form the AGC-kinase C-terminal domain. Residues 382-653 (KSDAGLLGKG…MQELTAHMWL (272 aa)) enclose the Protein kinase 2 domain. Residues 388-396 (LGKGAFSVV) and lysine 411 each bind ATP. Catalysis depends on aspartate 500, which acts as the Proton acceptor. Positions 706–772 (RGIKRQSGDK…IRETRGSDSS (67 aa)) are disordered. At serine 712 the chain carries Phosphoserine; by autocatalysis. Polar residues-rich tracts occupy residues 718–727 (SGNSKNSRVT) and 739–748 (EMTSSTSRPS).

This sequence belongs to the protein kinase superfamily. AGC Ser/Thr protein kinase family. S6 kinase subfamily. Requires Mg(2+) as cofactor.

The enzyme catalyses L-seryl-[protein] + ATP = O-phospho-L-seryl-[protein] + ADP + H(+). It carries out the reaction L-threonyl-[protein] + ATP = O-phospho-L-threonyl-[protein] + ADP + H(+). With respect to regulation, activated by multiple phosphorylations on threonine and serine residues. Serine/threonine kinase that may play a role in mediating the mitogen- and stress-induced effects on transcription. May repress transcription via phosphorylation of 'Ser-1' of histone H2A. May phosphorylate histone H3. This Caenorhabditis elegans protein is Putative ribosomal protein S6 kinase alpha-2 (rskn-2).